A 392-amino-acid polypeptide reads, in one-letter code: MKPIIYIKYGELTLKGKNRAQFIKVLVHNIKQMLLEYHELVYQVGYDNLKIINLEKYNLQQVINDLQQVYGIAFICVAYQVNKEINEIQLACNKLVNNTDQTFKIEARRNDKSFIYDSMQIKQICATYLLQNQPTLKVDVHHPQLLINIEIKHDCAIVYGHKIPGAKGLPVGINGKALVLLSGGIDSPVASRLIMKRGISVDFITFITPPHTSQKALDKTIALAKQITLNNHLTKANLYVCNFTKLQEEIAHISKESYRITLMRRYFMRIAKRLAIDIKAGALVTGEALGQVASQTLNSMQTISSVLNDFLVLRPLITYDKQEIISLAKQFNTYELSILPYDDSCSLFAPKNPTTNPNVQTAMKLEQESLVLDAIYELVFTKEITKINLSSK.

The region spanning 60 to 162 (QQVINDLQQV…HDCAIVYGHK (103 aa)) is the THUMP domain. Residues 180–181 (LL), 205–206 (TF), R264, G286, and Q295 each bind ATP.

This sequence belongs to the ThiI family.

The protein localises to the cytoplasm. It carries out the reaction [ThiI sulfur-carrier protein]-S-sulfanyl-L-cysteine + a uridine in tRNA + 2 reduced [2Fe-2S]-[ferredoxin] + ATP + H(+) = [ThiI sulfur-carrier protein]-L-cysteine + a 4-thiouridine in tRNA + 2 oxidized [2Fe-2S]-[ferredoxin] + AMP + diphosphate. The catalysed reaction is [ThiS sulfur-carrier protein]-C-terminal Gly-Gly-AMP + S-sulfanyl-L-cysteinyl-[cysteine desulfurase] + AH2 = [ThiS sulfur-carrier protein]-C-terminal-Gly-aminoethanethioate + L-cysteinyl-[cysteine desulfurase] + A + AMP + 2 H(+). It participates in cofactor biosynthesis; thiamine diphosphate biosynthesis. Catalyzes the ATP-dependent transfer of a sulfur to tRNA to produce 4-thiouridine in position 8 of tRNAs, which functions as a near-UV photosensor. Also catalyzes the transfer of sulfur to the sulfur carrier protein ThiS, forming ThiS-thiocarboxylate. This is a step in the synthesis of thiazole, in the thiamine biosynthesis pathway. The sulfur is donated as persulfide by IscS. This chain is Probable tRNA sulfurtransferase, found in Ureaplasma urealyticum serovar 10 (strain ATCC 33699 / Western).